We begin with the raw amino-acid sequence, 485 residues long: Sulfate adenylyltransferase subunit 1 (485 aa).

Residues 30 to 243 (KGLLRFLTCG…ELLETIDTQR (214 aa)) enclose the tr-type G domain. The segment at 39-46 (GSVDDGKS) is G1. 39–46 (GSVDDGKS) serves as a coordination point for GTP. The segment at 97–101 (GITID) is G2. A G3 region spans residues 118–121 (DTPG). Residues 118 to 122 (DTPGH) and 173 to 176 (NKMD) each bind GTP. Positions 173–176 (NKMD) are G4. Residues 210–212 (SAL) form a G5 region.

The protein belongs to the TRAFAC class translation factor GTPase superfamily. Classic translation factor GTPase family. CysN/NodQ subfamily. Heterodimer composed of CysD, the smaller subunit, and CysN.

The catalysed reaction is sulfate + ATP + H(+) = adenosine 5'-phosphosulfate + diphosphate. It functions in the pathway sulfur metabolism; hydrogen sulfide biosynthesis; sulfite from sulfate: step 1/3. With CysD forms the ATP sulfurylase (ATPS) that catalyzes the adenylation of sulfate producing adenosine 5'-phosphosulfate (APS) and diphosphate, the first enzymatic step in sulfur assimilation pathway. APS synthesis involves the formation of a high-energy phosphoric-sulfuric acid anhydride bond driven by GTP hydrolysis by CysN coupled to ATP hydrolysis by CysD. The protein is Sulfate adenylyltransferase subunit 1 of Shewanella oneidensis (strain ATCC 700550 / JCM 31522 / CIP 106686 / LMG 19005 / NCIMB 14063 / MR-1).